Consider the following 218-residue polypeptide: 1-Cys peroxiredoxin PER1 (218 aa).

Residues 4-164 form the Thioredoxin domain; it reads LTIGDTVPNL…VVRAVDSLLT (161 aa). Cysteine 46 acts as the Cysteine sulfenic acid (-SOH) intermediate in catalysis. The Bipartite nuclear localization signal motif lies at 194-217; it reads KKMFPQGFETADLPSKKGYLRFTK.

It belongs to the peroxiredoxin family. Prx6 subfamily.

The protein resides in the nucleus. The protein localises to the cytoplasm. It carries out the reaction a hydroperoxide + [thioredoxin]-dithiol = an alcohol + [thioredoxin]-disulfide + H2O. Functionally, thiol-specific peroxidase that catalyzes the reduction of hydrogen peroxide and organic hydroperoxides to water and alcohols, respectively. Seems to contribute to the inhibition of germination during stress. The polypeptide is 1-Cys peroxiredoxin PER1 (PER1) (Triticum aestivum (Wheat)).